The chain runs to 374 residues: UDP-N-acetylglucosamine--N-acetylmuramyl-(pentapeptide) pyrophosphoryl-undecaprenol N-acetylglucosamine transferase (374 aa).

Residues 13–15 (TGG), Asn-124, Arg-165, Ser-193, and Gln-294 contribute to the UDP-N-acetyl-alpha-D-glucosamine site.

This sequence belongs to the glycosyltransferase 28 family. MurG subfamily.

Its subcellular location is the cell inner membrane. It catalyses the reaction di-trans,octa-cis-undecaprenyl diphospho-N-acetyl-alpha-D-muramoyl-L-alanyl-D-glutamyl-meso-2,6-diaminopimeloyl-D-alanyl-D-alanine + UDP-N-acetyl-alpha-D-glucosamine = di-trans,octa-cis-undecaprenyl diphospho-[N-acetyl-alpha-D-glucosaminyl-(1-&gt;4)]-N-acetyl-alpha-D-muramoyl-L-alanyl-D-glutamyl-meso-2,6-diaminopimeloyl-D-alanyl-D-alanine + UDP + H(+). It functions in the pathway cell wall biogenesis; peptidoglycan biosynthesis. Its function is as follows. Cell wall formation. Catalyzes the transfer of a GlcNAc subunit on undecaprenyl-pyrophosphoryl-MurNAc-pentapeptide (lipid intermediate I) to form undecaprenyl-pyrophosphoryl-MurNAc-(pentapeptide)GlcNAc (lipid intermediate II). This chain is UDP-N-acetylglucosamine--N-acetylmuramyl-(pentapeptide) pyrophosphoryl-undecaprenol N-acetylglucosamine transferase, found in Rhizobium johnstonii (strain DSM 114642 / LMG 32736 / 3841) (Rhizobium leguminosarum bv. viciae).